Here is a 426-residue protein sequence, read N- to C-terminus: Pannexin-1 (426 aa).

Residues Met1 to Cys40 are Cytoplasmic-facing. Position 40 is an S-nitrosocysteine (Cys40). A helical transmembrane segment spans residues Ile41 to Gly61. The Extracellular segment spans residues Thr62–His106. Intrachain disulfides connect Cys66/Cys265 and Cys84/Cys246. Residues Lys107–Trp127 traverse the membrane as a helical segment. The Cytoplasmic segment spans residues Arg128–Arg217. A Phosphotyrosine modification is found at Tyr199. Residues Leu218–Ser238 traverse the membrane as a helical segment. Over Ser239–Lys266 the chain is Extracellular. Residue Asn255 is glycosylated (N-linked (GlcNAc...) asparagine). The helical transmembrane segment at Leu267–Leu287 threads the bilayer. At Ala288–Cys426 the chain is on the cytoplasmic side. S-nitrosocysteine is present on Cys347. The segment covering Asp405 to Glu414 has biased composition (polar residues). The segment at Asp405 to Cys426 is disordered. Basic and acidic residues predominate over residues Lys415 to Cys426.

It belongs to the pannexin family. Homoheptameric. In terms of processing, S-nitrosylation inhibits channel currents and ATP release. N-glycosylation plays a role in cell surface targeting. Glycosylation at its extracellular surface makes unlikely that two oligomers could dock to form an intercellular channel such as in gap junctions. Exists in three glycosylation states: non-glycosylated (GLY0), high-mannose glycosylated (GLY1), and fully mature glycosylated (GLY2). Post-translationally, cleaved by CASP3 and CASP7 during apoptosis. Cleavage opens the channel for the release of metabolites and induces plasma membrane permeability during apoptosis. In terms of processing, phosphorylated at Tyr-199 by SRC. Phosphorylation activates ATP release. Constitutively phosphorylated in vascular smooth muscle cells. As to expression, widely expressed. Highest expression is observed in oocytes and brain. Detected at very low levels in sperm cells.

The protein localises to the cell membrane. It localises to the endoplasmic reticulum membrane. It catalyses the reaction chloride(in) = chloride(out). The catalysed reaction is iodide(out) = iodide(in). The enzyme catalyses ATP(in) = ATP(out). It carries out the reaction K(+)(in) = K(+)(out). It catalyses the reaction Ca(2+)(in) = Ca(2+)(out). The catalysed reaction is Na(+)(in) = Na(+)(out). The enzyme catalyses nitrate(in) = nitrate(out). It carries out the reaction L-aspartate(out) = L-aspartate(in). It catalyses the reaction L-glutamate(out) = L-glutamate(in). The catalysed reaction is D-gluconate(in) = D-gluconate(out). The enzyme catalyses spermidine(in) = spermidine(out). In terms of biological role, ion channel involved in a variety of physiological functions such as blood pressure regulation, apoptotic cell clearance and oogenesis. Forms anion-selective channels with relatively low conductance and an order of permeabilities: nitrate&gt;iodide&gt;chlroride&gt;&gt;aspartate=glutamate=gluconate. Can release ATP upon activation through phosphorylation or cleavage at C-terminus. May play a role as a Ca(2+)-leak channel to regulate ER Ca(2+) homeostasis. Its function is as follows. During apoptosis, the C terminal tail is cleaved by caspases, which opens the main pore acting as a large-pore ATP efflux channel with a broad distribution, which allows the regulated release of molecules and ions smaller than 1 kDa, such as nucleotides ATP and UTP, and selective plasma membrane permeability to attract phagocytes that engulf the dying cells. The chain is Pannexin-1 from Homo sapiens (Human).